Consider the following 280-residue polypeptide: MDVIQRIKEKYDEFTNAEKKIADTILSDPKGIIESSISDLSEKAGVKSEASVVKFYKKLGLNSFQQFKVLLAQSISRAPLEIVYEDVSSEDDTKTITEKIFKATVRAILDTLNWLDIDSIERTVDLFKNAQRIIFIGFAASAAVAFDAFHKFTRIGKNCLFSNDEHIIAAILATASPSDLLVAISHTGETISVVNFAKKAKEMKMPVVTITGNRKSTLAKYSDVVLATNTKETKIRTDAMTSRIVQLVILDTIYTLLAARDPRAIENLNKSRLAVSELKY.

Positions 1–78 constitute an HTH rpiR-type domain; sequence MDVIQRIKEK…VLLAQSISRA (78 aa). A DNA-binding region (H-T-H motif) is located at residues 37 to 57; sequence ISDLSEKAGVKSEASVVKFYK. An SIS domain is found at 123–263; sequence TVDLFKNAQR…YTLLAARDPR (141 aa).

This is an uncharacterized protein from Thermotoga maritima (strain ATCC 43589 / DSM 3109 / JCM 10099 / NBRC 100826 / MSB8).